Reading from the N-terminus, the 139-residue chain is Maximins 4/H3 type 7 (139 aa).

The N-terminal stretch at 1–18 (MNFKYIVAVSFLIASAYA) is a signal peptide. Residues 19-43 (RSVQNDEQSLSQRDVLEEESLREIR) constitute a propeptide that is removed on maturation. At asparagine 70 the chain carries Asparagine amide. Positions 74–118 (TAEDHEVMKRLEAIMRDLDSLDYPEEASERETRGFNQDEIAKEKR) are excised as a propeptide. Isoleucine amide is present on isoleucine 138.

Belongs to the bombinin family. As to expression, expressed by the skin glands.

It is found in the secreted. In terms of biological role, maximin-4 shows antibacterial activity against both Gram-positive and Gram-negative bacteria. It also shows antimicrobial activity against the fungus C.albicans, but not against A.flavus nor P.uticale. It has little hemolytic activity. It does not possess a significant cytotoxicity against tumor cell lines. It does not possess a significant anti-HIV activity. Maximin-H3 shows antibacterial activity against both Gram-positive and Gram-negative bacteria. It also shows antimicrobial activity against the fungus C.albicans. Shows strong hemolytic activity. This Bombina maxima (Giant fire-bellied toad) protein is Maximins 4/H3 type 7.